We begin with the raw amino-acid sequence, 179 residues long: GTP-dependent dephospho-CoA kinase (179 aa).

Residues D55, V57, D74, K76, and E128 each coordinate GTP.

It belongs to the GTP-dependent DPCK family.

The catalysed reaction is 3'-dephospho-CoA + GTP = GDP + CoA + H(+). The protein operates within cofactor biosynthesis; coenzyme A biosynthesis. Catalyzes the GTP-dependent phosphorylation of the 3'-hydroxyl group of dephosphocoenzyme A to form coenzyme A (CoA). The polypeptide is GTP-dependent dephospho-CoA kinase (Saccharolobus islandicus (strain M.16.27) (Sulfolobus islandicus)).